Reading from the N-terminus, the 467-residue chain is Argininosuccinate lyase (467 aa).

This sequence belongs to the lyase 1 family. Argininosuccinate lyase subfamily.

It localises to the cytoplasm. It catalyses the reaction 2-(N(omega)-L-arginino)succinate = fumarate + L-arginine. It functions in the pathway amino-acid biosynthesis; L-arginine biosynthesis; L-arginine from L-ornithine and carbamoyl phosphate: step 3/3. In Rhizobium johnstonii (strain DSM 114642 / LMG 32736 / 3841) (Rhizobium leguminosarum bv. viciae), this protein is Argininosuccinate lyase.